Here is a 207-residue protein sequence, read N- to C-terminus: FMN-dependent NADH:quinone oxidoreductase 1 (207 aa).

FMN is bound by residues Ser9, 15–17, and 139–142; these read SIS and TRGG.

It belongs to the azoreductase type 1 family. As to quaternary structure, homodimer. FMN serves as cofactor.

The catalysed reaction is 2 a quinone + NADH + H(+) = 2 a 1,4-benzosemiquinone + NAD(+). It catalyses the reaction N,N-dimethyl-1,4-phenylenediamine + anthranilate + 2 NAD(+) = 2-(4-dimethylaminophenyl)diazenylbenzoate + 2 NADH + 2 H(+). Quinone reductase that provides resistance to thiol-specific stress caused by electrophilic quinones. In terms of biological role, also exhibits azoreductase activity. Catalyzes the reductive cleavage of the azo bond in aromatic azo compounds to the corresponding amines. This Trichormus variabilis (strain ATCC 29413 / PCC 7937) (Anabaena variabilis) protein is FMN-dependent NADH:quinone oxidoreductase 1.